The following is a 328-amino-acid chain: WUSCHEL-related homeobox 6 (328 aa).

Residues 1–11 (MEGSSNSPDRQ) are compositionally biased toward polar residues. Residues 1 to 45 (MEGSSNSPDRQSSGGSPPEERGGGGSGGGGGRSAAGEPVRSRWTP) are disordered. Over residues 23–33 (GGGSGGGGGRS) the composition is skewed to gly residues. A DNA-binding region (homeobox; WUS-type) is located at residues 38-102 (PVRSRWTPKP…NRRSRSRRRQ (65 aa)).

Belongs to the WUS homeobox family.

The protein resides in the nucleus. Functionally, transcription factor which may be involved in developmental processes. This chain is WUSCHEL-related homeobox 6 (WOX6), found in Oryza sativa subsp. indica (Rice).